A 221-amino-acid polypeptide reads, in one-letter code: Response regulator protein PmrA (221 aa).

Residues 2-116 (RILLAEDDLL…ELQARVRALT (115 aa)) form the Response regulatory domain. At Asp51 the chain carries 4-aspartylphosphate. Residues 124-218 (LPQLVHGELR…VRGIGYGIDQ (95 aa)) constitute a DNA-binding region (ompR/PhoB-type).

Its subcellular location is the cytoplasm. Member of the two-component regulatory system PmrA/PmrB that plays a role in the regulation of resistance towards polymyxin B and cationic antimicrobial peptides in response to limiting concentrations of Mg(2+). Functions as a transcriptional activator by direct binding to a cis-acting sequence upstream of the target gene promoters including lipase lipA and pmrH promoters. Also autoregulates its own pmrAB operon under Mg(2+)-limiting conditions. The protein is Response regulator protein PmrA (pmrA) of Pseudomonas aeruginosa (strain ATCC 15692 / DSM 22644 / CIP 104116 / JCM 14847 / LMG 12228 / 1C / PRS 101 / PAO1).